Here is a 181-residue protein sequence, read N- to C-terminus: Ankyrin repeat-containing protein YGL242C (181 aa).

Met1 carries the N-acetylmethionine modification. ANK repeat units follow at residues 49 to 78 and 85 to 120; these read LGNT…EIEI and DGDT…DPRV. The interval 151 to 181 is disordered; the sequence is IDSTNGSGDNNEDGEMIDDGPSDDDEEDDKK. Acidic residues predominate over residues 160-181; the sequence is NNEDGEMIDDGPSDDDEEDDKK. Phosphoserine is present on Ser172.

In Saccharomyces cerevisiae (strain ATCC 204508 / S288c) (Baker's yeast), this protein is Ankyrin repeat-containing protein YGL242C.